Consider the following 295-residue polypeptide: Indole-3-glycerol phosphate synthase (295 aa).

Belongs to the TrpC family.

It carries out the reaction 1-(2-carboxyphenylamino)-1-deoxy-D-ribulose 5-phosphate + H(+) = (1S,2R)-1-C-(indol-3-yl)glycerol 3-phosphate + CO2 + H2O. The protein operates within amino-acid biosynthesis; L-tryptophan biosynthesis; L-tryptophan from chorismate: step 4/5. The polypeptide is Indole-3-glycerol phosphate synthase (Prochlorococcus marinus subsp. pastoris (strain CCMP1986 / NIES-2087 / MED4)).